Reading from the N-terminus, the 215-residue chain is Protein FAM167A (215 aa).

2 disordered regions span residues 1 to 26 (MSVPQIQVEEVSEKDRPAGAAVPPDD) and 63 to 109 (RPAA…LTTG). Positions 124-157 (LRKELAEMRLQDQQLARQLMRLRGDINKLKIEQT) form a coiled coil.

This sequence belongs to the FAM167 (SEC) family.

In Mus musculus (Mouse), this protein is Protein FAM167A (Fam167a).